The chain runs to 588 residues: Aspartate--tRNA ligase (588 aa).

E177 is a binding site for L-aspartate. The tract at residues 201–204 (QLFK) is aspartate. R223 provides a ligand contact to L-aspartate. ATP is bound by residues 223-225 (RDE) and Q232. H451 is a binding site for L-aspartate. Residue E485 participates in ATP binding. Residue R492 participates in L-aspartate binding. 537–540 (GLDR) provides a ligand contact to ATP.

Belongs to the class-II aminoacyl-tRNA synthetase family. Type 1 subfamily. Homodimer.

The protein localises to the cytoplasm. It carries out the reaction tRNA(Asp) + L-aspartate + ATP = L-aspartyl-tRNA(Asp) + AMP + diphosphate. Its function is as follows. Catalyzes the attachment of L-aspartate to tRNA(Asp) in a two-step reaction: L-aspartate is first activated by ATP to form Asp-AMP and then transferred to the acceptor end of tRNA(Asp). This is Aspartate--tRNA ligase from Staphylococcus epidermidis (strain ATCC 35984 / DSM 28319 / BCRC 17069 / CCUG 31568 / BM 3577 / RP62A).